The following is a 475-amino-acid chain: Chromosomal replication initiator protein DnaA (475 aa).

The segment at 1-73 (MSDTEQERWS…LSCWQAELPD (73 aa)) is domain I, interacts with DnaA modulators. Positions 73–131 (DVHRIDLTVRSAMRCAAPVREAPATDARHPERSEGRNGVELKTVATAPASANHDALGGS) are domain II. The domain III, AAA+ region stretch occupies residues 132 to 354 (PLDPRLTFQS…GAINRLLAHS (223 aa)). ATP is bound by residues glycine 179, glycine 181, lysine 182, and threonine 183. The domain IV, binds dsDNA stretch occupies residues 355 to 475 (KLNAQPVTLE…VELLKRQLQE (121 aa)).

It belongs to the DnaA family. Oligomerizes as a right-handed, spiral filament on DNA at oriC.

The protein localises to the cytoplasm. Functionally, plays an essential role in the initiation and regulation of chromosomal replication. ATP-DnaA binds to the origin of replication (oriC) to initiate formation of the DNA replication initiation complex once per cell cycle. Binds the DnaA box (a 9 base pair repeat at the origin) and separates the double-stranded (ds)DNA. Forms a right-handed helical filament on oriC DNA; dsDNA binds to the exterior of the filament while single-stranded (ss)DNA is stabiized in the filament's interior. The ATP-DnaA-oriC complex binds and stabilizes one strand of the AT-rich DNA unwinding element (DUE), permitting loading of DNA polymerase. After initiation quickly degrades to an ADP-DnaA complex that is not apt for DNA replication. Binds acidic phospholipids. This Nitrobacter winogradskyi (strain ATCC 25391 / DSM 10237 / CIP 104748 / NCIMB 11846 / Nb-255) protein is Chromosomal replication initiator protein DnaA.